A 246-amino-acid polypeptide reads, in one-letter code: UPF0758 protein SSU98_1084 (246 aa).

One can recognise an MPN domain in the interval 103-225 (RILGSEKLGR…YYSFREESDV (123 aa)). Residues H174, H176, and D187 each contribute to the Zn(2+) site. The short motif at 174–187 (HNHPSGSVQPSRND) is the JAMM motif element.

Belongs to the UPF0758 family.

The polypeptide is UPF0758 protein SSU98_1084 (Streptococcus suis (strain 98HAH33)).